Consider the following 501-residue polypeptide: Probable malate:quinone oxidoreductase (501 aa).

Belongs to the MQO family. It depends on FAD as a cofactor.

It catalyses the reaction (S)-malate + a quinone = a quinol + oxaloacetate. The protein operates within carbohydrate metabolism; tricarboxylic acid cycle; oxaloacetate from (S)-malate (quinone route): step 1/1. This Paenarthrobacter aurescens (strain TC1) protein is Probable malate:quinone oxidoreductase.